The primary structure comprises 230 residues: UPF0758 protein Glov_0523 (230 aa).

The MPN domain occupies 108–230 (RFTSPAQVFD…YFSFVESGLL (123 aa)). Zn(2+) is bound by residues His179, His181, and Asp192. The short motif at 179–192 (HNHPSGDPAPSRED) is the JAMM motif element.

The protein belongs to the UPF0758 family.

This chain is UPF0758 protein Glov_0523, found in Trichlorobacter lovleyi (strain ATCC BAA-1151 / DSM 17278 / SZ) (Geobacter lovleyi).